A 557-amino-acid chain; its full sequence is Tight junction-associated protein 1 (557 aa).

A disordered region spans residues 1 to 37; it reads MTSAAPAKKPYRKAPPEHRELRLEIPGSRLEQEEPLT. At Thr-2 the chain carries N-acetylthreonine. Residues 14–23 show a composition bias toward basic and acidic residues; the sequence is APPEHRELRL. Residues 42-171 adopt a coiled-coil conformation; it reads MKLLQEENEE…EELNERYRLD (130 aa). Disordered stretches follow at residues 266-303 and 309-328; these read MSEG…SPEE and AFEK…LYPG. Positions 274–286 are enriched in pro residues; it reads PASPPAPGSPTPQ. Phosphoserine is present on Ser-300. Over residues 316–325 the composition is skewed to pro residues; the sequence is YPTPSPPHPL. Thr-318 carries the phosphothreonine modification. 2 positions are modified to phosphoserine: Ser-320 and Ser-345. The segment at 364–409 is disordered; it reads EEGSERARPSPVPSTPASAQASPHHQPSPAPLTLSAPASSASSEED. A compositionally biased stretch (polar residues) spans 378 to 388; sequence TPASAQASPHH. The segment covering 394-405 has biased composition (low complexity); that stretch reads PLTLSAPASSAS. Residue Thr-422 is modified to Phosphothreonine. Basic and acidic residues predominate over residues 439 to 456; sequence LPELQRHFAHSPADRDEV. A disordered region spans residues 439-557; sequence LPELQRHFAH…QAQEQGNLLN (119 aa). Ser-491 carries the post-translational modification Phosphoserine. A compositionally biased stretch (basic residues) spans 530-542; the sequence is RSPKRMGVHHLHR. A Phosphoserine modification is found at Ser-545. Residues 546–557 are compositionally biased toward polar residues; sequence LTQAQEQGNLLN.

Interacts with DLG1. Interacts with ARF6 (GTP-bound form). As to expression, ubiquitously expressed.

The protein localises to the golgi apparatus. It localises to the trans-Golgi network. It is found in the cell junction. The protein resides in the tight junction. Its subcellular location is the cell membrane. Plays a role in regulating the structure of the Golgi apparatus. The protein is Tight junction-associated protein 1 of Homo sapiens (Human).